Consider the following 233-residue polypeptide: Probable RNA 2'-phosphotransferase (233 aa).

It belongs to the KptA/TPT1 family.

Functionally, removes the 2'-phosphate from RNA via an intermediate in which the phosphate is ADP-ribosylated by NAD followed by a presumed transesterification to release the RNA and generate ADP-ribose 1''-2''-cyclic phosphate (APPR&gt;P). May function as an ADP-ribosylase. In Hyperthermus butylicus (strain DSM 5456 / JCM 9403 / PLM1-5), this protein is Probable RNA 2'-phosphotransferase.